The sequence spans 471 residues: Ubiquitin carboxyl-terminal hydrolase 8 (471 aa).

Positions 4, 6, 46, 49, 60, 63, 68, 73, 77, 83, 96, and 99 each coordinate Zn(2+). The UBP-type; degenerate zinc-finger motif lies at 22–122 (KTCNAARYIL…ILAKYWDDVC (101 aa)). The 332-residue stretch at 137–468 (SGLINMGSTC…QAYLLFYTIR (332 aa)) folds into the USP domain. Cys146 acts as the Nucleophile in catalysis. Zn(2+)-binding residues include His170, Cys174, Cys182, Cys185, His250, Cys271, Cys273, His276, Cys289, Cys292, Cys336, and Cys339. His427 serves as the catalytic Proton acceptor.

The protein belongs to the peptidase C19 family. UBP8 subfamily. In terms of assembly, component of the 1.8 MDa SAGA (Spt-Ada-Gcn5 acetyltransferase) complex, which is composed of 19 subunits TRA1, SPT7, TAF5, NGG1/ADA3, SGF73, SPT20/ADA5, SPT8, TAF12, TAF6, HFI1/ADA1, UBP8, GCN5, ADA2, SPT3, SGF29, TAF10, TAF9, SGF11 and SUS1. The SAGA complex is composed of 4 modules, namely the HAT (histone acetyltransferase) module (GCN5, ADA2, NGG1/ADA3 and SGF29), the DUB (deubiquitinating) module (UBP8, SGF11, SGF73 and SUS1), the core or TAF (TBP-associated factor) module (TAF5, TAF6, TAF9, TAF10 and TAF12), and the Tra1 or SPT (Suppressor of Ty) module (TRA1, HFI1/ADA1, SPT3, SPT7, SPT8 and SPT20/ADA5). The Tra1/SPT module binds activators, the core module recruits TBP (TATA-binding protein), the HAT module contains the histone H3 acetyltransferase GCN5, and the DUB module comprises the histone H2B deubiquitinase UBP8. Also identified in an altered form of SAGA, named SALSA (SAGA altered, Spt8 absent) or SLIK (SAGA-like) complex, which contains a C-terminal truncated form of SPT7 and is missing SPT8. However, it has been shown that the SAGA and SAGA-like SALSA/SLIK transcriptional coactivators are structurally and biochemically equivalent.

Its subcellular location is the nucleus. It catalyses the reaction Thiol-dependent hydrolysis of ester, thioester, amide, peptide and isopeptide bonds formed by the C-terminal Gly of ubiquitin (a 76-residue protein attached to proteins as an intracellular targeting signal).. Histone deubiquitinating enzyme component of the transcription coactivator SAGA complex. SAGA acts as a general cofactor required for essentially all RNA polymerase II transcription. At the promoters, SAGA is required for transcription pre-initiation complex (PIC) recruitment. It influences RNA polymerase II transcriptional activity through different activities such as TBP interaction (via core/TAF module) and promoter selectivity, interaction with transcription activators (via Tra1/SPT module), and chromatin modification through histone acetylation (via HAT module) and deubiquitination (via DUB module). SAGA preferentially acetylates histones H3 (to form H3K9ac, H3K14ac, H3K18ac and H3K23ac) and H2B and deubiquitinates histone H2B. SAGA interacts with DNA via upstream activating sequences (UASs). Also identified in a modified version of SAGA named SALSA or SLIK. The cleavage of SPT7 and the absence of the SPT8 subunit in SLIK neither drive any major conformational differences in its structure compared with SAGA, nor significantly affect HAT, DUB, or DNA-binding activities. Within the DUB module, the correctly positioned zinc finger domains of SGF11 and SGF73 are both required to fully activate the ubiquitin hydrolase UBP8. The DUB module is also linked to the splicing efficiency of many transcripts. This is Ubiquitin carboxyl-terminal hydrolase 8 (UBP8) from Saccharomyces cerevisiae (strain ATCC 204508 / S288c) (Baker's yeast).